The chain runs to 507 residues: Transcription factor CP2 (507 aa).

Positions 61–300 (ENKILPFQYV…SPGFNSSHNS (240 aa)) constitute a Grh/CP2 DB domain. Residues 133-395 (EHQQLEGWRW…LFNALKGRMV (263 aa)) are DNA-binding. Disordered stretches follow at residues 240-268 (PKGA…YQPS) and 296-316 (SSHN…QPEP). The span at 241 to 265 (KGADRKQKTDREKMEKRTPQEKEKY) shows a compositional bias: basic and acidic residues.

This sequence belongs to the grh/CP2 family. CP2 subfamily. Component of the SSP (stage selector protein) complex, which appears to be a heteromer of TFCP2 and 2 copies of NFE4.

It localises to the nucleus. Functionally, may function as a transcription factor. The polypeptide is Transcription factor CP2 (tfcp2) (Xenopus tropicalis (Western clawed frog)).